A 155-amino-acid polypeptide reads, in one-letter code: SsrA-binding protein (155 aa).

Belongs to the SmpB family.

The protein resides in the cytoplasm. In terms of biological role, required for rescue of stalled ribosomes mediated by trans-translation. Binds to transfer-messenger RNA (tmRNA), required for stable association of tmRNA with ribosomes. tmRNA and SmpB together mimic tRNA shape, replacing the anticodon stem-loop with SmpB. tmRNA is encoded by the ssrA gene; the 2 termini fold to resemble tRNA(Ala) and it encodes a 'tag peptide', a short internal open reading frame. During trans-translation Ala-aminoacylated tmRNA acts like a tRNA, entering the A-site of stalled ribosomes, displacing the stalled mRNA. The ribosome then switches to translate the ORF on the tmRNA; the nascent peptide is terminated with the 'tag peptide' encoded by the tmRNA and targeted for degradation. The ribosome is freed to recommence translation, which seems to be the essential function of trans-translation. This chain is SsrA-binding protein, found in Bacillus cereus (strain G9842).